A 548-amino-acid polypeptide reads, in one-letter code: Solute carrier family 22 member 7 (548 aa).

A helical membrane pass occupies residues 21 to 41; sequence VALLALPRVLLPLHFLLPIFL. An N-linked (GlcNAc...) asparagine glycan is attached at N91. A run of 11 helical transmembrane segments spans residues 146–166, 180–200, 204–224, 234–254, 259–279, 346–366, 376–397, 404–423, 432–452, 466–486, and 493–513; these read AASTFFFAGVLVGAVAFGYLS, VSTLVLGLASAASVSYVMFAI, LTGSALAGFTIIVMPLELEWL, VLSSTFWTGGVMLLALVGYLI, WLLLAVTLPCAPGILSLWWVP, ISLCCVVVWFGVNFSYYGLSL, YQTQLLFGAVELPSKLLVYLSV, LTQAGTLLGTALAFGTRLLV, TVLAVMGKAFSEAAFTTAYLF, MGLTALVGRLGGSLAPLAALL, and LPKLTYGGIALLAAGTALLLP. The Important for glutamate counteranion efflux role is filled by F441. The tract at residues 522–548 is disordered; the sequence is ETIQDVERKSAPTSLQEEEMPMKQVQN.

It belongs to the major facilitator (TC 2.A.1) superfamily. Organic cation transporter (TC 2.A.1.19) family. Mainly expressed in liver and kidney. In kidney, expressed in proximal tubular cells. Also expressed in pancreas, small intestine, spinal cord, lung, brain and heart. Expressed in fetal liver.

It is found in the basolateral cell membrane. Its subcellular location is the apical cell membrane. It localises to the cell membrane. The protein localises to the cytoplasm. The protein resides in the cytosol. The enzyme catalyses orotate(out) + L-glutamate(in) = orotate(in) + L-glutamate(out). It catalyses the reaction 3',5'-cyclic GMP(in) = 3',5'-cyclic GMP(out). The catalysed reaction is GMP(in) = GMP(out). It carries out the reaction 2'-deoxyguanosine(in) = 2'-deoxyguanosine(out). The enzyme catalyses GDP(in) = GDP(out). It catalyses the reaction guanosine(in) = guanosine(out). The catalysed reaction is GTP(in) = GTP(out). It carries out the reaction 3',5'-cyclic AMP(in) = 3',5'-cyclic AMP(out). The enzyme catalyses creatinine(in) = creatinine(out). It catalyses the reaction prostaglandin E2(out) = prostaglandin E2(in). The catalysed reaction is 2-oxoglutarate(in) = 2-oxoglutarate(out). It carries out the reaction glutarate(in) = glutarate(out). The enzyme catalyses urate(out) = urate(in). It catalyses the reaction estrone 3-sulfate(out) = estrone 3-sulfate(in). The catalysed reaction is prostaglandin F2alpha(out) = prostaglandin F2alpha(in). Functions as a Na(+)-independent bidirectional multispecific transporter. Contributes to the renal and hepatic elimination of endogenous organic compounds from the systemic circulation into the urine and bile, respectively. Capable of transporting a wide range of purine and pyrimidine nucleobases, nucleosides and nucleotides, with cGMP, 2'deoxyguanosine and GMP being the preferred substrates. Functions as a pH- and chloride-independent cGMP bidirectional facilitative transporter that can regulate both intracellular and extracellular levels of cGMP and may be involved in cGMP signaling pathways. Mediates orotate/glutamate bidirectional exchange and most likely display a physiological role in hepatic release of glutamate into the blood. Involved in renal secretion and possible reabsorption of creatinine. Able to uptake prostaglandin E2 (PGE2) and may contribute to PGE2 renal excretion. Also transports alpha-ketoglutarate and urate. Apart from the orotate/glutamate exchange, the counterions for the uptake of other SLC22A7/OAT2 substrates remain to be identified. Functionally, non functional transporter. Its function is as follows. Involved in the uptake of prostaglandin F2-alpha (PGF2-alpha). In Homo sapiens (Human), this protein is Solute carrier family 22 member 7.